A 487-amino-acid polypeptide reads, in one-letter code: Cytochrome P450 monooxygenase pyvB (487 aa).

A helical transmembrane segment spans residues 17–37 (PAYSSVVIGALVVCLVCLVWP). Cys426 lines the heme pocket.

The protein belongs to the cytochrome P450 family. It depends on heme as a cofactor.

It is found in the membrane. It functions in the pathway secondary metabolite biosynthesis. In terms of biological role, cytochrome P450 monooxygenase; part of the gene cluster that mediates the biosynthesis of pyranoviolin A, a pyranonigrin analog with a C-3 methoxy group. Initially, the PKS portion of pyvA synthesizes C-10 carbon chain from 5 molecules of malonyl-CoA, which is then condensed with the thiolation (T) domain-bound glycine activated by the adenylation (A) domain. The subsequent chain release by Dieckmann condensation (DKC) could be catalyzed by the TE domain present at the C-terminus of pyvA and/or the alpha/beta hydrolase pyvD, installing the tetramic acid moiety. The FAD-dependent monooxygenase pyvC next epoxidizes one of the olefins of the polyketide part, and the epoxide ring-opening induces the dihydro-gamma-pyrone ring formation. The cytochrome P450 monooxygeanse pyvB would be responsible for the 2 consecutive reactions, in which the dihydro-gamma-pyrone is oxidized to gamma-pyrone and C-7 is hydroxylated to yield pyranonigrin F. Finally, the O-methyltransferase pyvH methylates the C-3 hydroxy group to complete the biosynthesis. This chain is Cytochrome P450 monooxygenase pyvB, found in Aspergillus violaceofuscus (strain CBS 115571).